A 627-amino-acid chain; its full sequence is 1-deoxy-D-xylulose-5-phosphate synthase (627 aa).

Thiamine diphosphate-binding positions include H87 and 128–130; that span reads GHS. D159 lines the Mg(2+) pocket. Thiamine diphosphate-binding positions include 160–161, N188, F295, and E375; that span reads GA. N188 serves as a coordination point for Mg(2+).

The protein belongs to the transketolase family. DXPS subfamily. Homodimer. It depends on Mg(2+) as a cofactor. Thiamine diphosphate is required as a cofactor.

It catalyses the reaction D-glyceraldehyde 3-phosphate + pyruvate + H(+) = 1-deoxy-D-xylulose 5-phosphate + CO2. Its pathway is metabolic intermediate biosynthesis; 1-deoxy-D-xylulose 5-phosphate biosynthesis; 1-deoxy-D-xylulose 5-phosphate from D-glyceraldehyde 3-phosphate and pyruvate: step 1/1. Functionally, catalyzes the acyloin condensation reaction between C atoms 2 and 3 of pyruvate and glyceraldehyde 3-phosphate to yield 1-deoxy-D-xylulose-5-phosphate (DXP). This Pseudomonas paraeruginosa (strain DSM 24068 / PA7) (Pseudomonas aeruginosa (strain PA7)) protein is 1-deoxy-D-xylulose-5-phosphate synthase.